A 285-amino-acid polypeptide reads, in one-letter code: Ribosomal RNA small subunit methyltransferase A (285 aa).

S-adenosyl-L-methionine is bound by residues Asn21, Leu23, Gly48, Glu69, Asp94, and Asn127.

It belongs to the class I-like SAM-binding methyltransferase superfamily. rRNA adenine N(6)-methyltransferase family. RsmA subfamily.

The protein resides in the cytoplasm. It catalyses the reaction adenosine(1518)/adenosine(1519) in 16S rRNA + 4 S-adenosyl-L-methionine = N(6)-dimethyladenosine(1518)/N(6)-dimethyladenosine(1519) in 16S rRNA + 4 S-adenosyl-L-homocysteine + 4 H(+). Functionally, specifically dimethylates two adjacent adenosines (A1518 and A1519) in the loop of a conserved hairpin near the 3'-end of 16S rRNA in the 30S particle. May play a critical role in biogenesis of 30S subunits. The sequence is that of Ribosomal RNA small subunit methyltransferase A from Koribacter versatilis (strain Ellin345).